The following is a 51-amino-acid chain: Small, acid-soluble spore protein K (51 aa).

Residues 1-51 (MRNKAKGFPNPISFNGNKANNADEHASKRPDGTTRDRPQERMRSSNHFNSL) are disordered. Positions 21–43 (NADEHASKRPDGTTRDRPQERMR) are enriched in basic and acidic residues.

It belongs to the SspK family.

It localises to the spore core. This chain is Small, acid-soluble spore protein K, found in Shouchella clausii (strain KSM-K16) (Alkalihalobacillus clausii).